The sequence spans 358 residues: Protein Wnt-8 (358 aa).

Positions 1-22 (MQNTTLFILATLLIFCPFFTAS) are cleaved as a signal peptide. A disulfide bond links Cys-55 and Cys-66. Asn-104 carries an N-linked (GlcNAc...) asparagine glycan. 10 disulfides stabilise this stretch: Cys-105–Cys-113, Cys-115–Cys-133, Cys-181–Cys-195, Cys-183–Cys-190, Cys-260–Cys-298, Cys-276–Cys-291, Cys-295–Cys-337, Cys-313–Cys-328, Cys-315–Cys-325, and Cys-320–Cys-321. The O-palmitoleoyl serine moiety is linked to residue Ser-187. Asn-263 and Asn-282 each carry an N-linked (GlcNAc...) asparagine glycan.

It belongs to the Wnt family. Homooligomer; disulfide-linked, leading to inactivation. Interacts with the long chain of cer1. Post-translationally, palmitoleoylation is required for efficient binding to frizzled receptors. Depalmitoleoylation leads to Wnt signaling pathway inhibition. In terms of processing, proteolytic processing by tiki1 and tiki2 promotes oxidation and formation of large disulfide-bond oligomers, leading to inactivation of wnt8.

The protein localises to the secreted. It localises to the extracellular space. It is found in the extracellular matrix. Ligand for members of the frizzled family of seven transmembrane receptors. Plays a role in ventral mesodermal patterning during embryogenesis. Mimics Nieuwkoop center activity. Causes dorsal mesodermal differentiation of animal cap ectoderm when coexpressed with noggin and nuclear, sequence-specific DNA-binding protein xBra. None of these molecules causes dorsal mesoderm formation when expressed alone. The polypeptide is Protein Wnt-8 (wnt8) (Xenopus laevis (African clawed frog)).